Here is an 800-residue protein sequence, read N- to C-terminus: Phosphate transporter PHO1 homolog 9 (800 aa).

Residues 1–346 (MKFGREFETQ…SRNASKPYLN (346 aa)) form the SPX domain. The Cytoplasmic segment spans residues 1–398 (MKFGREFETQ…KTKREKHRIT (398 aa)). 3 disordered regions span residues 38–77 (QKQQRPPPPPPPPSTGDTVPLKTDGGEGGGGGGGGGPGLS), 91–119 (NRASRSPKKSHKHHNPLSSKRHHHHHNHH), and 212–234 (PDLNSVASAPSSPHSTMRTPAPS). Over residues 42–51 (RPPPPPPPPS) the composition is skewed to pro residues. Residues 63 to 75 (GEGGGGGGGGGPG) are compositionally biased toward gly residues. Over residues 95–119 (RSPKKSHKHHNPLSSKRHHHHHNHH) the composition is skewed to basic residues. Over residues 216-229 (SVASAPSSPHSTMR) the composition is skewed to polar residues. Residues 399-419 (YFLGFFSGCAVALAIAITVLV) traverse the membrane as a helical segment. The Extracellular segment spans residues 420–439 (HIRGLTKSEGRHQYMENIFP). A helical transmembrane segment spans residues 440 to 460 (LYSLFGFVAVHLFMYAADIYF). The Cytoplasmic portion of the chain corresponds to 461–483 (WSRYRVNYPFIFGFEQGNDLGYR). Residues 484–504 (EVLLVGSGLAVLTFGGVISNL) form a helical membrane-spanning segment. The Extracellular segment spans residues 505–520 (DMEMDPRTKSFSVITE). Residues 521–541 (LVPLALLVCLMMVLFCPFNII) form a helical membrane-spanning segment. The Cytoplasmic segment spans residues 542–670 (YRSSRYFFVG…IFEMKRGTYW (129 aa)). One can recognise an EXS domain in the interval 606-800 (YDSEIYKELY…FQELGGSKSV (195 aa)). The helical transmembrane segment at 671–691 (LTVAVTTSSIATLFNTYWDIF) threads the bilayer. Over 692–718 (RDWGLMNRNSKNPWLRDKLLVPYKSIY) the chain is Extracellular. A helical transmembrane segment spans residues 719 to 739 (FIVMVANVVLRLAWMQTVLGI). Residues 740 to 800 (KEAPFLHKRA…FQELGGSKSV (61 aa)) lie on the Cytoplasmic side of the membrane.

It belongs to the SYG1 (TC 2.A.94) family. Specifically expressed in pollen grains.

The protein localises to the cell membrane. Functionally, may transport inorganic phosphate (Pi). This Arabidopsis thaliana (Mouse-ear cress) protein is Phosphate transporter PHO1 homolog 9 (PHO1-H9).